The chain runs to 149 residues: Calmodulin (149 aa).

The residue at position 2 (Ala2) is an N-acetylalanine. 4 consecutive EF-hand domains span residues Glu8 to Asn43, Pro44 to Asp79, Asp81 to Lys116, and Leu117 to Lys149. Ca(2+) contacts are provided by Asp21, Asp23, Asp25, Thr27, Glu32, Asp57, Asp59, Asn61, Thr63, Glu68, Asp94, Asp96, Asn98, and Glu105. Lys116 carries the N6,N6,N6-trimethyllysine modification. Ca(2+)-binding residues include Asp130, Asp132, Asp134, Gln136, and Glu141.

It belongs to the calmodulin family.

Calmodulin mediates the control of a large number of enzymes, ion channels and other proteins by Ca(2+). Among the enzymes to be stimulated by the calmodulin-Ca(2+) complex are a number of protein kinases and phosphatases. In Karlodinium veneficum (Dinoflagellate), this protein is Calmodulin.